The following is a 434-amino-acid chain: Glutamate-1-semialdehyde 2,1-aminomutase 2 (434 aa).

An N6-(pyridoxal phosphate)lysine modification is found at K270.

This sequence belongs to the class-III pyridoxal-phosphate-dependent aminotransferase family. HemL subfamily. In terms of assembly, homodimer. Pyridoxal 5'-phosphate is required as a cofactor.

Its subcellular location is the cytoplasm. It catalyses the reaction (S)-4-amino-5-oxopentanoate = 5-aminolevulinate. Its pathway is porphyrin-containing compound metabolism; protoporphyrin-IX biosynthesis; 5-aminolevulinate from L-glutamyl-tRNA(Glu): step 2/2. The chain is Glutamate-1-semialdehyde 2,1-aminomutase 2 from Bacillus cereus (strain G9842).